The following is a 222-amino-acid chain: Cytidylate kinase (222 aa).

9-17 lines the ATP pocket; the sequence is GPAGSGKTT.

It belongs to the cytidylate kinase family. Type 1 subfamily.

It is found in the cytoplasm. The catalysed reaction is CMP + ATP = CDP + ADP. The enzyme catalyses dCMP + ATP = dCDP + ADP. The protein is Cytidylate kinase of Thermosipho africanus (strain TCF52B).